A 272-amino-acid polypeptide reads, in one-letter code: L-aspartate dehydrogenase (272 aa).

Ala125 and Asn192 together coordinate NAD(+). His222 is an active-site residue.

The protein belongs to the L-aspartate dehydrogenase family.

It carries out the reaction L-aspartate + NADP(+) + H2O = oxaloacetate + NH4(+) + NADPH + H(+). The enzyme catalyses L-aspartate + NAD(+) + H2O = oxaloacetate + NH4(+) + NADH + H(+). Its pathway is cofactor biosynthesis; NAD(+) biosynthesis; iminoaspartate from L-aspartate (dehydrogenase route): step 1/1. Specifically catalyzes the NAD or NADP-dependent dehydrogenation of L-aspartate to iminoaspartate. This Nitrosopumilus maritimus (strain SCM1) protein is L-aspartate dehydrogenase.